Reading from the N-terminus, the 418-residue chain is Probable carboxypeptidase AFLA_000940 (418 aa).

The signal sequence occupies residues 1-18 (MKATDLFHVTVLVAGALA). An N-linked (GlcNAc...) asparagine glycan is attached at asparagine 74. Aspartate 147 provides a ligand contact to Zn(2+). An N-linked (GlcNAc...) asparagine glycan is attached at asparagine 168. The Proton acceptor role is filled by glutamate 179. Zn(2+) is bound at residue glutamate 180.

It belongs to the peptidase M20A family. Zn(2+) is required as a cofactor.

The protein resides in the secreted. This Aspergillus flavus (strain ATCC 200026 / FGSC A1120 / IAM 13836 / NRRL 3357 / JCM 12722 / SRRC 167) protein is Probable carboxypeptidase AFLA_000940.